Reading from the N-terminus, the 70-residue chain is SYQRFLFLVVVASLIATSLAIPKDLEKRGTTCYCGNTIGIYWFAKKTCPSGRGYTGSCGYFLGICCYPVD.

An N-terminal signal peptide occupies residues 1–21; that stretch reads SYQRFLFLVVVASLIATSLAI. The propeptide occupies 22–26; it reads PKDLE. Disulfide bonds link Cys-32-Cys-65, Cys-34-Cys-58, and Cys-48-Cys-66.

This sequence belongs to the sea anemone type 3 (BDS) potassium channel toxin family.

The protein resides in the secreted. It is found in the nematocyst. Potently and selectively inhibits voltage-gated potassium channels Kv11/KCNH/ERG. Acts as a gating-modifier toxin that shifts the voltage-dependence of ERG activation in the positive direction and suppresses its current amplitudes elicited by strong depolarizing pulses that maximally activate the channels. The polypeptide is U-actitoxin-Ael2c (Anthopleura elegantissima (Green aggregating anemone)).